Reading from the N-terminus, the 398-residue chain is Phosphoglycerate kinase (398 aa).

Substrate contacts are provided by residues 21–23, R36, 59–62, R119, and R157; these read DFN and HLGR. ATP is bound by residues K208, G296, E327, and 354 to 357; that span reads GGDS.

It belongs to the phosphoglycerate kinase family. As to quaternary structure, monomer.

The protein resides in the cytoplasm. It catalyses the reaction (2R)-3-phosphoglycerate + ATP = (2R)-3-phospho-glyceroyl phosphate + ADP. It participates in carbohydrate degradation; glycolysis; pyruvate from D-glyceraldehyde 3-phosphate: step 2/5. This chain is Phosphoglycerate kinase, found in Streptococcus mutans serotype c (strain ATCC 700610 / UA159).